The sequence spans 313 residues: Ribosomal RNA small subunit methyltransferase H (313 aa).

S-adenosyl-L-methionine contacts are provided by residues Gly-35–His-37, Asp-55, Phe-79, Asp-100, and Gln-107.

It belongs to the methyltransferase superfamily. RsmH family.

The protein localises to the cytoplasm. It carries out the reaction cytidine(1402) in 16S rRNA + S-adenosyl-L-methionine = N(4)-methylcytidine(1402) in 16S rRNA + S-adenosyl-L-homocysteine + H(+). In terms of biological role, specifically methylates the N4 position of cytidine in position 1402 (C1402) of 16S rRNA. This chain is Ribosomal RNA small subunit methyltransferase H, found in Burkholderia ambifaria (strain MC40-6).